Reading from the N-terminus, the 270-residue chain is DNA repair protein RecO (270 aa).

Belongs to the RecO family.

In terms of biological role, involved in DNA repair and RecF pathway recombination. The sequence is that of DNA repair protein RecO from Synechococcus sp. (strain WH7803).